The chain runs to 733 residues: Polyribonucleotide nucleotidyltransferase (733 aa).

Residues D489 and D495 each contribute to the Mg(2+) site. One can recognise a KH domain in the interval 556–615; the sequence is PKIDTIKIDVDKIKIVIGKGGETIDKIIAETGVKIDIDEEGNVSIYSSDQDAINRAKEII. An S1 motif domain is found at 625–693; sequence DEVYHAKVVR…AKGRVDASMK (69 aa). The segment at 691-733 is disordered; it reads SMKVLLPRPPKSDKPKHHHDKGHHPHKEYKGHKDHQESPKTEE. Positions 704 to 723 are enriched in basic residues; it reads KPKHHHDKGHHPHKEYKGHK. Residues 724–733 are compositionally biased toward basic and acidic residues; that stretch reads DHQESPKTEE.

Belongs to the polyribonucleotide nucleotidyltransferase family. It depends on Mg(2+) as a cofactor.

The protein resides in the cytoplasm. The enzyme catalyses RNA(n+1) + phosphate = RNA(n) + a ribonucleoside 5'-diphosphate. Its function is as follows. Involved in mRNA degradation. Catalyzes the phosphorolysis of single-stranded polyribonucleotides processively in the 3'- to 5'-direction. This Streptococcus sanguinis (strain SK36) protein is Polyribonucleotide nucleotidyltransferase.